Consider the following 585-residue polypeptide: Bestrophin-1 (585 aa).

Residues 1-31 (MTITYTSQVANARLGSFSRLLLCWRGSIYKL) lie on the Cytoplasmic side of the membrane. Ca(2+) is bound at residue Ala10. Residues 32–51 (LYGEFLIFLLCYYIIRFIYR) form a helical membrane-spanning segment. Residues 52–60 (LALTEEQQL) lie on the Extracellular side of the membrane. The chain crosses the membrane as a helical span at residues 61–82 (MFEKLTLYCDSYIQLIPISFVL). Over 83 to 237 (GFYVTLVVTR…DWISIPLVYT (155 aa)) the chain is Cytoplasmic. A helical membrane pass occupies residues 238–255 (QVVTVAVYSFFLTCLVGR). The Extracellular portion of the chain corresponds to 256-274 (QFLNPAKAYPGHELDLVVP). A helical membrane pass occupies residues 275 to 288 (VFTFLQFFFYVGWL). The Cytoplasmic portion of the chain corresponds to 289–585 (KVAEQLINPF…ALENRDEAHS (297 aa)). Residues Gln293, Asn296, Asp301, and Asp304 each contribute to the Ca(2+) site. Positions 346 to 379 (PYTAASAQFRRASFMGSTFNISLNKEEMEFQPNQ) are auto-inhibitory segment.

The protein belongs to the anion channel-forming bestrophin (TC 1.A.46) family. Calcium-sensitive chloride channel subfamily. Interacts with YWHAG; this interaction promotes the ligand-gated L-glutamate channel activity leading to the positive regulation of NMDA glutamate receptor activity through the L-glutamate secretion. Predominantly expressed in the basolateral membrane of the retinal pigment epithelium.

Its subcellular location is the cell membrane. It is found in the basolateral cell membrane. The catalysed reaction is chloride(in) = chloride(out). It catalyses the reaction hydrogencarbonate(in) = hydrogencarbonate(out). It carries out the reaction 4-aminobutanoate(in) = 4-aminobutanoate(out). The enzyme catalyses L-glutamate(out) = L-glutamate(in). With respect to regulation, inactivated by sulfhydryl-reactive agents. Functionally, ligand-gated anion channel that allows the movement of anions across cell membranes when activated by calcium (Ca2+). Allows the movement of chloride and hydrogencarbonate. Found in a partially open conformation leading to significantly smaller chloride movement. Upon F2R/PAR-1 activation, the sequestered calcium is released into the cytosol of astrocytes, leading to the (Ca2+)-dependent release of L-glutamate into the synaptic cleft that targets the neuronal postsynaptic GRIN2A/NMDAR receptor resulting in the synaptic plasticity regulation. Upon activation of the norepinephrine-alpha-1 adrenergic receptor signaling pathway, transports as well D-serine than L-glutamate in a (Ca2+)-dependent manner, leading to activation of adjacent NMDAR receptors and therefore regulates the heterosynaptic long-term depression and metaplasticity during initial memory acquisition. Releases the 4-aminobutanoate neurotransmitter in a (Ca2+)-dependent manner, and participates in its tonic release from cerebellar glial cells. In Homo sapiens (Human), this protein is Bestrophin-1.